A 262-amino-acid polypeptide reads, in one-letter code: Small ribosomal subunit protein mS23 (262 aa).

The disordered stretch occupies residues 211–262 (SGQSDEAPEGEGSDMSAGEYDMAVEELAGQGSIPNTPQSTVVPEGTSAPAHA). Positions 242 to 251 (SIPNTPQSTV) are enriched in polar residues.

This sequence belongs to the mitochondrion-specific ribosomal protein mS23 family. Component of the mitochondrial small ribosomal subunit.

Its subcellular location is the mitochondrion. In Phaeosphaeria nodorum (strain SN15 / ATCC MYA-4574 / FGSC 10173) (Glume blotch fungus), this protein is Small ribosomal subunit protein mS23 (RSM25).